Reading from the N-terminus, the 231-residue chain is 2-C-methyl-D-erythritol 4-phosphate cytidylyltransferase (231 aa).

The protein belongs to the IspD/TarI cytidylyltransferase family. IspD subfamily.

The catalysed reaction is 2-C-methyl-D-erythritol 4-phosphate + CTP + H(+) = 4-CDP-2-C-methyl-D-erythritol + diphosphate. It functions in the pathway isoprenoid biosynthesis; isopentenyl diphosphate biosynthesis via DXP pathway; isopentenyl diphosphate from 1-deoxy-D-xylulose 5-phosphate: step 2/6. Its function is as follows. Catalyzes the formation of 4-diphosphocytidyl-2-C-methyl-D-erythritol from CTP and 2-C-methyl-D-erythritol 4-phosphate (MEP). The sequence is that of 2-C-methyl-D-erythritol 4-phosphate cytidylyltransferase from Fusobacterium nucleatum subsp. nucleatum (strain ATCC 25586 / DSM 15643 / BCRC 10681 / CIP 101130 / JCM 8532 / KCTC 2640 / LMG 13131 / VPI 4355).